We begin with the raw amino-acid sequence, 701 residues long: Elongation factor G (701 aa).

Residues 8-290 enclose the tr-type G domain; sequence ARYRNIGISA…AVIEYLPAPT (283 aa). GTP-binding positions include 17 to 24, 88 to 92, and 142 to 145; these read AHIDAGKT, DTPGH, and NKMD.

The protein belongs to the TRAFAC class translation factor GTPase superfamily. Classic translation factor GTPase family. EF-G/EF-2 subfamily.

Its subcellular location is the cytoplasm. Functionally, catalyzes the GTP-dependent ribosomal translocation step during translation elongation. During this step, the ribosome changes from the pre-translocational (PRE) to the post-translocational (POST) state as the newly formed A-site-bound peptidyl-tRNA and P-site-bound deacylated tRNA move to the P and E sites, respectively. Catalyzes the coordinated movement of the two tRNA molecules, the mRNA and conformational changes in the ribosome. This Sodalis glossinidius (strain morsitans) protein is Elongation factor G.